A 250-amino-acid chain; its full sequence is ATP synthase subunit b 2 (250 aa).

The chain crosses the membrane as a helical span at residues 2-22; it reads LIDWFTVFAQILNFVILLGLL.

It belongs to the ATPase B chain family. As to quaternary structure, F-type ATPases have 2 components, F(1) - the catalytic core - and F(0) - the membrane proton channel. F(1) has five subunits: alpha(3), beta(3), gamma(1), delta(1), epsilon(1). F(0) has four main subunits: a(1), b(1), b'(1) and c(10-14). The alpha and beta chains form an alternating ring which encloses part of the gamma chain. F(1) is attached to F(0) by a central stalk formed by the gamma and epsilon chains, while a peripheral stalk is formed by the delta, b and b' chains.

The protein resides in the cellular thylakoid membrane. In terms of biological role, f(1)F(0) ATP synthase produces ATP from ADP in the presence of a proton or sodium gradient. F-type ATPases consist of two structural domains, F(1) containing the extramembraneous catalytic core and F(0) containing the membrane proton channel, linked together by a central stalk and a peripheral stalk. During catalysis, ATP synthesis in the catalytic domain of F(1) is coupled via a rotary mechanism of the central stalk subunits to proton translocation. Functionally, component of the F(0) channel, it forms part of the peripheral stalk, linking F(1) to F(0). The sequence is that of ATP synthase subunit b 2 from Picosynechococcus sp. (strain ATCC 27264 / PCC 7002 / PR-6) (Agmenellum quadruplicatum).